The following is a 75-amino-acid chain: Small ribosomal subunit protein bS18 (75 aa).

Residues 1–11 (MAAKPFFRRRK) are compositionally biased toward basic residues. The segment at 1-21 (MAAKPFFRRRKTDPFEGENAP) is disordered.

It belongs to the bacterial ribosomal protein bS18 family. As to quaternary structure, part of the 30S ribosomal subunit. Forms a tight heterodimer with protein bS6.

Functionally, binds as a heterodimer with protein bS6 to the central domain of the 16S rRNA, where it helps stabilize the platform of the 30S subunit. This is Small ribosomal subunit protein bS18 from Jannaschia sp. (strain CCS1).